A 188-amino-acid polypeptide reads, in one-letter code: Ribosome maturation factor RimM (188 aa).

The 83-residue stretch at 93 to 175 (QDEFYFTDLI…EIEVQGDLSD (83 aa)) folds into the PRC barrel domain.

Belongs to the RimM family. Binds ribosomal protein uS19.

It localises to the cytoplasm. Functionally, an accessory protein needed during the final step in the assembly of 30S ribosomal subunit, possibly for assembly of the head region. Essential for efficient processing of 16S rRNA. May be needed both before and after RbfA during the maturation of 16S rRNA. It has affinity for free ribosomal 30S subunits but not for 70S ribosomes. In Gluconacetobacter diazotrophicus (strain ATCC 49037 / DSM 5601 / CCUG 37298 / CIP 103539 / LMG 7603 / PAl5), this protein is Ribosome maturation factor RimM.